A 285-amino-acid polypeptide reads, in one-letter code: Guanylate kinase 2, chloroplastic/mitochondrial (285 aa).

Residues 1–19 (MLLTRRFSSALARSPLLPR) are compositionally biased toward low complexity. Residues 1–42 (MLLTRRFSSALARSPLLPRSLPPPRAVPATPPAPRPPPRRLM) constitute a chloroplast and mitochondrion transit peptide. The interval 1 to 66 (MLLTRRFSSA…PPPPSGADKD (66 aa)) is disordered. The span at 20 to 36 (SLPPPRAVPATPPAPRP) shows a compositional bias: pro residues. The span at 40-50 (RLMSSSSSGWH) shows a compositional bias: low complexity. The 182-residue stretch at 91–272 (PMILVISGPS…AVKQVESIID (182 aa)) folds into the Guanylate kinase-like domain. 98–105 (GPSGVGKD) lines the ATP pocket. Active-site residues include arginine 130, arginine 224, and arginine 235. ATP is bound at residue asparagine 255.

It belongs to the guanylate kinase family. As to quaternary structure, monomer.

The protein localises to the plastid. The protein resides in the chloroplast. It localises to the mitochondrion. The enzyme catalyses GMP + ATP = GDP + ADP. Functionally, essential for recycling GMP and indirectly, cGMP. Essential for chloroplast differentiation at early stage of leaf development. May not be involved in the synthesis and maintenance of the organellar DNA during leaf development. The polypeptide is Guanylate kinase 2, chloroplastic/mitochondrial (V2) (Oryza sativa subsp. japonica (Rice)).